The following is a 500-amino-acid chain: uncharacterized protein (500 aa).

A helical membrane pass occupies residues 27–47 (IFALILIVFGFIIAPLLPGIF).

It is found in the membrane. This is an uncharacterized protein from Borreliella burgdorferi (strain ATCC 35210 / DSM 4680 / CIP 102532 / B31) (Borrelia burgdorferi).